The primary structure comprises 316 residues: Ribosomal protein L11 methyltransferase (316 aa).

S-adenosyl-L-methionine is bound by residues Thr-159, Gly-179, Asp-201, and Asn-243.

This sequence belongs to the methyltransferase superfamily. PrmA family.

It localises to the cytoplasm. The enzyme catalyses L-lysyl-[protein] + 3 S-adenosyl-L-methionine = N(6),N(6),N(6)-trimethyl-L-lysyl-[protein] + 3 S-adenosyl-L-homocysteine + 3 H(+). In terms of biological role, methylates ribosomal protein L11. This chain is Ribosomal protein L11 methyltransferase, found in Gloeobacter violaceus (strain ATCC 29082 / PCC 7421).